A 461-amino-acid polypeptide reads, in one-letter code: Trimethylamine monooxygenase (461 aa).

FAD-binding residues include S14, E39, K40, Q41, M47, W48, and H64. The NADP(+) site is built by W72 and N74. The FAD site is built by N74 and A127. The NADP(+) site is built by S206, S207, S209, R230, and T231. The FAD site is built by Q319 and T322. An NADP(+)-binding site is contributed by R413.

This sequence belongs to the FMO family. FAD is required as a cofactor.

It carries out the reaction trimethylamine + NADPH + O2 = trimethylamine N-oxide + NADP(+) + H2O. In terms of biological role, catalyzes the oxidation of trimethylamine (TMA) to produce trimethylamine N-oxide (TMAO). The produced TMAO is accumulated in the cell, functioning as a piezolyte, improving both growth and survival at high hydrostatic pressure (HHP). The protein is Trimethylamine monooxygenase of Myroides profundi.